Reading from the N-terminus, the 599-residue chain is Elongation factor 4 (599 aa).

Residues 2 to 184 (KNIRNFSIIA…RLVRDIPPPQ (183 aa)) form the tr-type G domain. Residues 14–19 (DHGKST) and 131–134 (NKID) each bind GTP.

Belongs to the TRAFAC class translation factor GTPase superfamily. Classic translation factor GTPase family. LepA subfamily.

The protein localises to the cell inner membrane. It carries out the reaction GTP + H2O = GDP + phosphate + H(+). Required for accurate and efficient protein synthesis under certain stress conditions. May act as a fidelity factor of the translation reaction, by catalyzing a one-codon backward translocation of tRNAs on improperly translocated ribosomes. Back-translocation proceeds from a post-translocation (POST) complex to a pre-translocation (PRE) complex, thus giving elongation factor G a second chance to translocate the tRNAs correctly. Binds to ribosomes in a GTP-dependent manner. The polypeptide is Elongation factor 4 (Salmonella paratyphi C (strain RKS4594)).